Consider the following 179-residue polypeptide: Large ribosomal subunit protein uL5 (179 aa).

Belongs to the universal ribosomal protein uL5 family. In terms of assembly, part of the 50S ribosomal subunit; part of the 5S rRNA/L5/L18/L25 subcomplex. Contacts the 5S rRNA and the P site tRNA. Forms a bridge to the 30S subunit in the 70S ribosome.

Functionally, this is one of the proteins that bind and probably mediate the attachment of the 5S RNA into the large ribosomal subunit, where it forms part of the central protuberance. In the 70S ribosome it contacts protein S13 of the 30S subunit (bridge B1b), connecting the 2 subunits; this bridge is implicated in subunit movement. Contacts the P site tRNA; the 5S rRNA and some of its associated proteins might help stabilize positioning of ribosome-bound tRNAs. This Neisseria gonorrhoeae (strain ATCC 700825 / FA 1090) protein is Large ribosomal subunit protein uL5.